A 196-amino-acid polypeptide reads, in one-letter code: Recombination protein RecR (196 aa).

Residues 57 to 72 (CERCHTFTQADICATC) form a C4-type zinc finger. The Toprim domain occupies 80-175 (SKLCVVETPA…RLTRLARGVP (96 aa)).

Belongs to the RecR family.

Its function is as follows. May play a role in DNA repair. It seems to be involved in an RecBC-independent recombinational process of DNA repair. It may act with RecF and RecO. In Albidiferax ferrireducens (strain ATCC BAA-621 / DSM 15236 / T118) (Rhodoferax ferrireducens), this protein is Recombination protein RecR.